Here is a 330-residue protein sequence, read N- to C-terminus: Free fatty acid receptor 2 (330 aa).

Residues 1–12 (MLPDWKSSLILM) are Extracellular-facing. Residues 13–33 (AYIIIFLTGLPANLLALRAFV) form a helical membrane-spanning segment. The Cytoplasmic portion of the chain corresponds to 34–41 (GRIRQPQP). The helical transmembrane segment at 42 to 62 (APVHILLLSLTLADLLLLLLL) threads the bilayer. The Extracellular portion of the chain corresponds to 63–84 (PFKIIEAASNFRWYLPKVVCAL). A helical membrane pass occupies residues 85-105 (TSFGFYSSIYCSTWLLAGISI). Topologically, residues 106–126 (ERYLGVAFPVQYKLSRRPLYG) are cytoplasmic. A helical membrane pass occupies residues 127-147 (VIAALVAWVMSFGHCTIVIIV). At 148 to 173 (QYLNTTEQVRSGNEITCYENFTDNQL) the chain is on the extracellular side. Residues N151 and N167 are each glycosylated (N-linked (GlcNAc...) asparagine). A helical transmembrane segment spans residues 174-194 (DVVLPVRLELCLVLFFIPMAV). Residues 195–219 (TIFCYWRFVWIMLSQPLVGAQRRRR) lie on the Cytoplasmic side of the membrane. A helical membrane pass occupies residues 220–240 (AVGLAVVTLLNFLVCFGPYNV). The Extracellular segment spans residues 241-255 (SHLVGYHQRKSPWWR). A helical membrane pass occupies residues 256-276 (SIAVVFSSLNASLDPLLFYFS). Over 277-330 (SSVVRRAFGRGLQVLRNQGSSLLGRRGKDTAEGTNEDRGVGQGEGMPSSDFTTE) the chain is Cytoplasmic. Residues 299 to 330 (LGRRGKDTAEGTNEDRGVGQGEGMPSSDFTTE) are disordered. Basic and acidic residues predominate over residues 302–315 (RGKDTAEGTNEDRG).

It belongs to the G-protein coupled receptor 1 family. As to quaternary structure, interacts with FCN1 (via Fibrinogen C-terminal domain). Expressed at relatively high levels in peripheral blood leukocytes and, to lesser extent, in spleen.

It is found in the cell membrane. Its function is as follows. G protein-coupled receptor that is activated by a major product of dietary fiber digestion, the short chain fatty acids (SCFAs), and that plays a role in the regulation of whole-body energy homeostasis and in intestinal immunity. In omnivorous mammals, the short chain fatty acids acetate, propionate and butyrate are produced primarily by the gut microbiome that metabolizes dietary fibers. SCFAs serve as a source of energy but also act as signaling molecules. That G protein-coupled receptor is probably coupled to the pertussis toxin-sensitive, G(i/o)-alpha family of G proteins but also to the Gq family. Its activation results in the formation of inositol 1,4,5-trisphosphate, the mobilization of intracellular calcium, the phosphorylation of the MAPK3/ERK1 and MAPK1/ERK2 kinases and the inhibition of intracellular cAMP accumulation. May play a role in glucose homeostasis by regulating the secretion of GLP-1, in response to short-chain fatty acids accumulating in the intestine. May also regulate the production of LEP/Leptin, a hormone acting on the central nervous system to inhibit food intake. Finally, may also regulate whole-body energy homeostasis through adipogenesis regulating both differentiation and lipid storage of adipocytes. In parallel to its role in energy homeostasis, may also mediate the activation of the inflammatory and immune responses by SCFA in the intestine, regulating the rapid production of chemokines and cytokines. May also play a role in the resolution of the inflammatory response and control chemotaxis in neutrophils. In addition to SCFAs, may also be activated by the extracellular lectin FCN1 in a process leading to activation of monocytes and inducing the secretion of interleukin-8/IL-8 in response to the presence of microbes. Among SCFAs, the fatty acids containing less than 6 carbons, the most potent activators are probably acetate, propionate and butyrate. Exhibits a SCFA-independent constitutive G protein-coupled receptor activity. This is Free fatty acid receptor 2 (FFAR2) from Homo sapiens (Human).